Reading from the N-terminus, the 329-residue chain is Probable ABC transporter permease protein MG188 (329 aa).

6 helical membrane passes run 30–50, 96–116, 128–148, 176–196, 234–254, and 283–303; these read FLLF…PFFL, LISL…IVFV, VFFL…VYIF, ALWA…VLII, LIFL…LALF, and NLAG…GLVL. Residues 88 to 303 form the ABC transmembrane type-1 domain; it reads LRNSFLYSLI…VLGVCYGLVL (216 aa).

It belongs to the binding-protein-dependent transport system permease family. MalFG subfamily.

It is found in the cell membrane. Its function is as follows. Probably part of a binding-protein-dependent transport system. Probably responsible for the translocation of the substrate across the membrane. The sequence is that of Probable ABC transporter permease protein MG188 from Mycoplasma genitalium (strain ATCC 33530 / DSM 19775 / NCTC 10195 / G37) (Mycoplasmoides genitalium).